Consider the following 361-residue polypeptide: Chorismate synthase (361 aa).

Residues Arg-48 and Arg-54 each contribute to the NADP(+) site. Residues 125-127 (RSS), 238-239 (NA), Gly-278, 293-297 (KPTSS), and Arg-319 contribute to the FMN site.

This sequence belongs to the chorismate synthase family. As to quaternary structure, homotetramer. The cofactor is FMNH2.

The catalysed reaction is 5-O-(1-carboxyvinyl)-3-phosphoshikimate = chorismate + phosphate. Its pathway is metabolic intermediate biosynthesis; chorismate biosynthesis; chorismate from D-erythrose 4-phosphate and phosphoenolpyruvate: step 7/7. Its function is as follows. Catalyzes the anti-1,4-elimination of the C-3 phosphate and the C-6 proR hydrogen from 5-enolpyruvylshikimate-3-phosphate (EPSP) to yield chorismate, which is the branch point compound that serves as the starting substrate for the three terminal pathways of aromatic amino acid biosynthesis. This reaction introduces a second double bond into the aromatic ring system. This chain is Chorismate synthase, found in Shigella flexneri serotype 5b (strain 8401).